The chain runs to 176 residues: Ribosome rescue factor SmrB (176 aa).

Residues 98 to 173 (LDVHGLNQDQ…RSTAILFLIH (76 aa)) enclose the Smr domain.

It belongs to the SmrB family. As to quaternary structure, associates with collided ribosomes, but not with correctly translating polysomes.

In terms of biological role, acts as a ribosome collision sensor. Detects stalled/collided disomes (pairs of ribosomes where the leading ribosome is stalled and a second ribosome has collided with it) and endonucleolytically cleaves mRNA at the 5' boundary of the stalled ribosome. Stalled/collided disomes form a new interface (primarily via the 30S subunits) that binds SmrB. Cleaved mRNA becomes available for tmRNA ligation, leading to ribosomal subunit dissociation and rescue of stalled ribosomes. This is Ribosome rescue factor SmrB from Buchnera aphidicola subsp. Baizongia pistaciae (strain Bp).